A 195-amino-acid polypeptide reads, in one-letter code: Peptidyl-tRNA hydrolase (195 aa).

Residue Y17 participates in tRNA binding. H22 serves as the catalytic Proton acceptor. TRNA contacts are provided by Y68, N70, and N116.

It belongs to the PTH family. In terms of assembly, monomer.

The protein localises to the cytoplasm. The catalysed reaction is an N-acyl-L-alpha-aminoacyl-tRNA + H2O = an N-acyl-L-amino acid + a tRNA + H(+). In terms of biological role, hydrolyzes ribosome-free peptidyl-tRNAs (with 1 or more amino acids incorporated), which drop off the ribosome during protein synthesis, or as a result of ribosome stalling. Functionally, catalyzes the release of premature peptidyl moieties from peptidyl-tRNA molecules trapped in stalled 50S ribosomal subunits, and thus maintains levels of free tRNAs and 50S ribosomes. In Shewanella oneidensis (strain ATCC 700550 / JCM 31522 / CIP 106686 / LMG 19005 / NCIMB 14063 / MR-1), this protein is Peptidyl-tRNA hydrolase.